Consider the following 66-residue polypeptide: Beta-toxin Cbo4 (66 aa).

An LCN-type CS-alpha/beta domain is found at Lys-1–Lys-66. 4 cysteine pairs are disulfide-bonded: Cys-12-Cys-65, Cys-16-Cys-41, Cys-25-Cys-46, and Cys-29-Cys-48. Residue Lys-66 is modified to Lysine amide.

The protein belongs to the long (4 C-C) scorpion toxin superfamily. Sodium channel inhibitor family. Beta subfamily. In terms of tissue distribution, expressed by the venom gland.

The protein resides in the secreted. Beta toxins bind voltage-independently at site-4 of sodium channels and shift the voltage of activation toward more negative potentials thereby affecting sodium channel activation and promoting spontaneous and repetitive firing. Is active on the human voltage-gated sodium channels Nav1.4/SCN4A, Nav1.5/SCN5A and Nav1.6/SCN8A when tested at 200 nM. In vivo, is toxic to mice when intraperitoneally injected. This is Beta-toxin Cbo4 from Centruroides bonito (Scorpion).